Reading from the N-terminus, the 396-residue chain is Purine ribonucleoside efflux pump NepI (396 aa).

Over methionine 1 to alanine 21 the chain is Cytoplasmic. Residues valine 22–leucine 42 traverse the membrane as a helical segment. The Periplasmic portion of the chain corresponds to leucine 43 to glutamate 54. Residues glycine 55–isoleucine 75 traverse the membrane as a helical segment. The Cytoplasmic segment spans residues threonine 76 to arginine 85. The helical transmembrane segment at tyrosine 86–asparagine 106 threads the bilayer. Residue serine 107 is a topological domain, periplasmic. Residues phenylalanine 108–methionine 128 traverse the membrane as a helical segment. Residues serine 129 to serine 147 are Cytoplasmic-facing. The chain crosses the membrane as a helical span at residues valine 148–glycine 168. Topologically, residues glutamate 169 to asparagine 175 are periplasmic. The helical transmembrane segment at valine 176–proline 196 threads the bilayer. Topologically, residues serine 197–arginine 215 are cytoplasmic. The helical transmembrane segment at proline 216–phenylalanine 236 threads the bilayer. Residues threonine 237–threonine 255 lie on the Periplasmic side of the membrane. Residues leucine 256–leucine 276 form a helical membrane-spanning segment. The Cytoplasmic portion of the chain corresponds to lysine 277–lysine 281. A helical transmembrane segment spans residues leucine 282–glycine 302. Residues serine 303–lysine 305 are Periplasmic-facing. Residues isoleucine 306–tryptophan 326 form a helical membrane-spanning segment. Residues serine 327 to serine 343 are Cytoplasmic-facing. A helical membrane pass occupies residues isoleucine 344–leucine 364. The Periplasmic portion of the chain corresponds to aspartate 365–asparagine 366. A helical membrane pass occupies residues isoleucine 367 to valine 387. Residues threonine 388 to serine 396 lie on the Cytoplasmic side of the membrane.

It belongs to the major facilitator superfamily. DHA1 family. NepI (TC 2.A.1.2.26) subfamily.

The protein localises to the cell inner membrane. The catalysed reaction is inosine(in) + H(+)(out) = inosine(out) + H(+)(in). It catalyses the reaction guanosine(in) + H(+)(out) = guanosine(out) + H(+)(in). Its function is as follows. Involved in the efflux of purine ribonucleosides, such as inosine and guanosine. The polypeptide is Purine ribonucleoside efflux pump NepI (Escherichia coli O6:H1 (strain CFT073 / ATCC 700928 / UPEC)).